The primary structure comprises 40 residues: Photosystem II reaction center protein J (40 aa).

A helical transmembrane segment spans residues 8-28; the sequence is IPLWVIGTVAGILVIGLIGIF.

Belongs to the PsbJ family. In terms of assembly, PSII is composed of 1 copy each of membrane proteins PsbA, PsbB, PsbC, PsbD, PsbE, PsbF, PsbH, PsbI, PsbJ, PsbK, PsbL, PsbM, PsbT, PsbX, PsbY, PsbZ, Psb30/Ycf12, at least 3 peripheral proteins of the oxygen-evolving complex and a large number of cofactors. It forms dimeric complexes.

Its subcellular location is the plastid. The protein localises to the chloroplast thylakoid membrane. In terms of biological role, one of the components of the core complex of photosystem II (PSII). PSII is a light-driven water:plastoquinone oxidoreductase that uses light energy to abstract electrons from H(2)O, generating O(2) and a proton gradient subsequently used for ATP formation. It consists of a core antenna complex that captures photons, and an electron transfer chain that converts photonic excitation into a charge separation. In Lepidium virginicum (Virginia pepperweed), this protein is Photosystem II reaction center protein J.